Consider the following 549-residue polypeptide: Cell pattern formation-associated protein StuA (549 aa).

An HTH APSES-type domain is found at 86 to 192; it reads RVTATLWEDE…HNIGALLYHP (107 aa). The segment at residues 120 to 141 is a DNA-binding region (H-T-H motif); the sequence is GTKLLNVAGMTRGRRDGILKSE. Disordered stretches follow at residues 205 to 227, 246 to 288, 332 to 466, and 514 to 549; these read AERR…LPSI, SLAN…DLHR, REED…DHLN, and ASTV…QSFG. Over residues 246–266 the composition is skewed to polar residues; it reads SLANGPQSLASTPQPLANGSQ. Basic and acidic residues-rich tracts occupy residues 278-288, 332-346, and 385-395; these read RGREEEEDLHR, REED…HNAH, and RGRDEDDDHRS. Residues 516-545 are nuclear localization domain; it reads TVAASPSYPSAPVYDTAARPPSAISAPRRQ. Residues 532-549 are compositionally biased toward low complexity; that stretch reads AARPPSAISAPRRQQSFG.

This sequence belongs to the EFG1/PHD1/stuA family.

The protein resides in the nucleus. Transcription factor that regulates asexual reproduction. Binds the StuA-response elements (StRE) with the consensus sequence 5'-(A/T)CGCG(T/A)N(A/C)-3' at the promoters of target genes. This chain is Cell pattern formation-associated protein StuA, found in Gibberella moniliformis (strain M3125 / FGSC 7600) (Maize ear and stalk rot fungus).